We begin with the raw amino-acid sequence, 317 residues long: tRNA pseudouridine synthase B (317 aa).

Asp47 serves as the catalytic Nucleophile.

Belongs to the pseudouridine synthase TruB family. Type 1 subfamily.

The catalysed reaction is uridine(55) in tRNA = pseudouridine(55) in tRNA. Functionally, responsible for synthesis of pseudouridine from uracil-55 in the psi GC loop of transfer RNAs. This Shewanella sp. (strain ANA-3) protein is tRNA pseudouridine synthase B.